The primary structure comprises 287 residues: Cyclopropane mycolic acid synthase 3 (287 aa).

S-adenosyl-L-methionine contacts are provided by residues 33–34 (YS), 68–76 (LLDIGCGWG), 94–99 (TLSENQ), and 123–124 (WE). Cys269 is an active-site residue.

The protein belongs to the CFA/CMAS family. As to quaternary structure, homodimer.

It is found in the cytoplasm. The catalysed reaction is a 1-acyl-2-(9Z)-enoyl-sn-glycero-3-phospholipid + S-adenosyl-L-methionine = a 1-acyl-2-(9-cyclopronane)-acyl-sn-glycero-3-phospholipid + S-adenosyl-L-homocysteine + H(+). It functions in the pathway lipid metabolism; mycolic acid biosynthesis. In terms of biological role, involved in the phagosome maturation block (PMB). Catalyzes the conversion of a double bond to a cyclopropane ring at the proximal position of an alpha mycolic acid via the transfer of a methylene group from S-adenosyl-L-methionine. It can use cis, cis 11,14-eicosadienoic acid and linoelaidic acid as substrate. Cyclopropanated mycolic acids are key factors participating in cell envelope permeability, host immunomodulation and persistence. This is Cyclopropane mycolic acid synthase 3 (pcaA) from Mycobacterium tuberculosis (strain CDC 1551 / Oshkosh).